Reading from the N-terminus, the 256-residue chain is MYPSRNKRGSYFNQRRQYSRNHVWKRPTAAKRHDWKRRPSNTSKPNDEPKMSAQRIHENQYGPEFVMAQNSAISSFISYPDLGRSEPNRSRSYIRLKQLRFKGTVKIEQVPLAMNMDGSTPKVEGVFSLVIVVDRKPHLGPSGCLHTFDELFGARIHSHGNLSVTPALKDRYYIRHVCKRVLSVEKDTLMVDVEGSIPLSNRRINCWATFKDVDRESCKGVYDNISKNALLVYYCWMSDTPAKASTFVSFDLDYIG.

The segment at 1 to 53 (MYPSRNKRGSYFNQRRQYSRNHVWKRPTAAKRHDWKRRPSNTSKPNDEPKMSA) is disordered. Over residues 17 to 39 (QYSRNHVWKRPTAAKRHDWKRRP) the composition is skewed to basic residues. Positions 21–42 (NHVWKRPTAAKRHDWKRRPSNT) match the Bipartite nuclear localization signal motif. The Nuclear localization signal signature appears at 81–96 (DLGRSEPNRSRSYIRL). The tract at residues 150–187 (ELFGARIHSHGNLSVTPALKDRYYIRHVCKRVLSVEKD) is interaction with Arabidopsis thaliana NSI protein.

It belongs to the begomovirus nuclear shuttle protein family. As to quaternary structure, binds to single-stranded and double-stranded viral DNA. Interacts with the host nuclear shuttle interacting (NSI) protein. This interaction may allow NSP to recruit NSI monomers to the viral genome and thus regulate nuclear export of viral genome by NSP.

The protein localises to the host nucleus. The protein resides in the host cytoplasm. Its subcellular location is the host cell membrane. Its function is as follows. Binds to the genomic viral ssDNA, shuttles it into and out of the cell nucleus. Begomoviruses use 2 proteins to transport their DNA from cell to cell. The nuclear shuttle protein (NSP) shuttles it between nucleus and cytoplasm and the movement protein (MP) probably transports the DNA-NSP complex to the cell periphery and facilitates movement across the cell wall. The sequence is that of Nuclear shuttle protein from Abutilon mosaic virus (isolate West India) (AbMV).